The chain runs to 383 residues: Sulfate adenylyltransferase (383 aa).

The protein belongs to the sulfate adenylyltransferase family.

The catalysed reaction is sulfate + ATP + H(+) = adenosine 5'-phosphosulfate + diphosphate. The protein operates within sulfur metabolism; hydrogen sulfide biosynthesis; sulfite from sulfate: step 1/3. This chain is Sulfate adenylyltransferase, found in Halothermothrix orenii (strain H 168 / OCM 544 / DSM 9562).